The sequence spans 232 residues: Protein DOG1-like 4 (232 aa).

The 221-residue stretch at 9 to 229 (EEKFLEFYES…RRWGNRRHYV (221 aa)) folds into the DOG1 domain.

This Arabidopsis thaliana (Mouse-ear cress) protein is Protein DOG1-like 4.